A 335-amino-acid chain; its full sequence is Aspartate carbamoyltransferase catalytic subunit (335 aa).

The carbamoyl phosphate site is built by arginine 54 and threonine 55. Lysine 82 contributes to the L-aspartate binding site. Carbamoyl phosphate-binding residues include arginine 104, histidine 134, and glutamine 137. Residues arginine 177 and arginine 232 each coordinate L-aspartate. Glycine 277 and proline 278 together coordinate carbamoyl phosphate.

This sequence belongs to the aspartate/ornithine carbamoyltransferase superfamily. ATCase family. Heterododecamer (2C3:3R2) of six catalytic PyrB chains organized as two trimers (C3), and six regulatory PyrI chains organized as three dimers (R2).

The catalysed reaction is carbamoyl phosphate + L-aspartate = N-carbamoyl-L-aspartate + phosphate + H(+). Its pathway is pyrimidine metabolism; UMP biosynthesis via de novo pathway; (S)-dihydroorotate from bicarbonate: step 2/3. Its function is as follows. Catalyzes the condensation of carbamoyl phosphate and aspartate to form carbamoyl aspartate and inorganic phosphate, the committed step in the de novo pyrimidine nucleotide biosynthesis pathway. The protein is Aspartate carbamoyltransferase catalytic subunit of Paenarthrobacter aurescens (strain TC1).